The sequence spans 463 residues: 3-phosphoshikimate 1-carboxyvinyltransferase (463 aa).

3-phosphoshikimate is bound by residues Lys-26, Ser-27, and Arg-31. Lys-26 contributes to the phosphoenolpyruvate binding site. Gly-99 and Arg-127 together coordinate phosphoenolpyruvate. Residues Ser-163, Ser-164, Gln-165, Ser-188, Asp-300, and Lys-327 each contribute to the 3-phosphoshikimate site. Gln-165 provides a ligand contact to phosphoenolpyruvate. The active-site Proton acceptor is the Asp-300. 2 residues coordinate phosphoenolpyruvate: Arg-331 and Arg-372.

The protein belongs to the EPSP synthase family. Monomer.

The protein resides in the cytoplasm. The catalysed reaction is 3-phosphoshikimate + phosphoenolpyruvate = 5-O-(1-carboxyvinyl)-3-phosphoshikimate + phosphate. It participates in metabolic intermediate biosynthesis; chorismate biosynthesis; chorismate from D-erythrose 4-phosphate and phosphoenolpyruvate: step 6/7. Its function is as follows. Catalyzes the transfer of the enolpyruvyl moiety of phosphoenolpyruvate (PEP) to the 5-hydroxyl of shikimate-3-phosphate (S3P) to produce enolpyruvyl shikimate-3-phosphate and inorganic phosphate. This is 3-phosphoshikimate 1-carboxyvinyltransferase from Burkholderia pseudomallei (Pseudomonas pseudomallei).